Consider the following 283-residue polypeptide: Bifunctional protein FolD 2 (283 aa).

NADP(+) contacts are provided by residues 165-167 (GRG), T192, and V233.

It belongs to the tetrahydrofolate dehydrogenase/cyclohydrolase family. In terms of assembly, homodimer.

It catalyses the reaction (6R)-5,10-methylene-5,6,7,8-tetrahydrofolate + NADP(+) = (6R)-5,10-methenyltetrahydrofolate + NADPH. The catalysed reaction is (6R)-5,10-methenyltetrahydrofolate + H2O = (6R)-10-formyltetrahydrofolate + H(+). It functions in the pathway one-carbon metabolism; tetrahydrofolate interconversion. Its function is as follows. Catalyzes the oxidation of 5,10-methylenetetrahydrofolate to 5,10-methenyltetrahydrofolate and then the hydrolysis of 5,10-methenyltetrahydrofolate to 10-formyltetrahydrofolate. The sequence is that of Bifunctional protein FolD 2 from Nocardioides sp. (strain ATCC BAA-499 / JS614).